A 171-amino-acid polypeptide reads, in one-letter code: 6,7-dimethyl-8-ribityllumazine synthase (171 aa).

Residues Phe30, Ala64 to Glu66, and Ala88 to Ile90 contribute to the 5-amino-6-(D-ribitylamino)uracil site. Position 93–94 (Glu93–Thr94) interacts with (2S)-2-hydroxy-3-oxobutyl phosphate. Catalysis depends on His96, which acts as the Proton donor. Residue Asn121 coordinates 5-amino-6-(D-ribitylamino)uracil. Residue Arg135 coordinates (2S)-2-hydroxy-3-oxobutyl phosphate.

Belongs to the DMRL synthase family.

It carries out the reaction (2S)-2-hydroxy-3-oxobutyl phosphate + 5-amino-6-(D-ribitylamino)uracil = 6,7-dimethyl-8-(1-D-ribityl)lumazine + phosphate + 2 H2O + H(+). Its pathway is cofactor biosynthesis; riboflavin biosynthesis; riboflavin from 2-hydroxy-3-oxobutyl phosphate and 5-amino-6-(D-ribitylamino)uracil: step 1/2. Its function is as follows. Catalyzes the formation of 6,7-dimethyl-8-ribityllumazine by condensation of 5-amino-6-(D-ribitylamino)uracil with 3,4-dihydroxy-2-butanone 4-phosphate. This is the penultimate step in the biosynthesis of riboflavin. This Polynucleobacter necessarius subsp. necessarius (strain STIR1) protein is 6,7-dimethyl-8-ribityllumazine synthase.